A 298-amino-acid chain; its full sequence is NAD kinase (298 aa).

Asp80 (proton acceptor) is an active-site residue. NAD(+)-binding positions include Asp80 to Gly81, Asn154 to Asp155, Arg182, Asp184, Thr195 to Ser200, Ala219, and Gln253.

Belongs to the NAD kinase family. A divalent metal cation is required as a cofactor.

Its subcellular location is the cytoplasm. The catalysed reaction is NAD(+) + ATP = ADP + NADP(+) + H(+). Its function is as follows. Involved in the regulation of the intracellular balance of NAD and NADP, and is a key enzyme in the biosynthesis of NADP. Catalyzes specifically the phosphorylation on 2'-hydroxyl of the adenosine moiety of NAD to yield NADP. The chain is NAD kinase from Paracidovorax citrulli (strain AAC00-1) (Acidovorax citrulli).